The primary structure comprises 102 residues: Large ribosomal subunit protein bL21 (102 aa).

It belongs to the bacterial ribosomal protein bL21 family. As to quaternary structure, part of the 50S ribosomal subunit. Contacts protein L20.

This protein binds to 23S rRNA in the presence of protein L20. This is Large ribosomal subunit protein bL21 from Clavibacter sepedonicus (Clavibacter michiganensis subsp. sepedonicus).